Here is a 289-residue protein sequence, read N- to C-terminus: UPF0725 protein At1g27860 (289 aa).

The tract at residues 266–289 is disordered; sequence DQQRSMTLPSGEQAESSKKRPRLS. Over residues 268-279 the composition is skewed to polar residues; the sequence is QRSMTLPSGEQA.

This sequence belongs to the UPF0725 (EMB2204) family.

The chain is UPF0725 protein At1g27860 from Arabidopsis thaliana (Mouse-ear cress).